The sequence spans 135 residues: Transcription antitermination protein NusB (135 aa).

This sequence belongs to the NusB family.

In terms of biological role, involved in transcription antitermination. Required for transcription of ribosomal RNA (rRNA) genes. Binds specifically to the boxA antiterminator sequence of the ribosomal RNA (rrn) operons. In Shewanella piezotolerans (strain WP3 / JCM 13877), this protein is Transcription antitermination protein NusB.